Consider the following 363-residue polypeptide: Ribosome-binding ATPase YchF (363 aa).

In terms of domain architecture, OBG-type G spans 3-256; that stretch reads FKCGIVGLPN…LDDEEKVEFL (254 aa). 12–17 is a binding site for ATP; that stretch reads NVGKST. Residues serine 16 and threonine 36 each coordinate Mg(2+). One can recognise a TGS domain in the interval 278–361; the sequence is NLQTYFTAGV…QDGDVMHFRF (84 aa).

Requires Mg(2+) as cofactor.

Functionally, ATPase that binds to both the 70S ribosome and the 50S ribosomal subunit in a nucleotide-independent manner. Does not hydrolyze GTP. This chain is Ribosome-binding ATPase YchF, found in Haemophilus influenzae (strain ATCC 51907 / DSM 11121 / KW20 / Rd).